The primary structure comprises 246 residues: ATP synthase subunit a, chloroplastic (246 aa).

Transmembrane regions (helical) follow at residues 35 to 55 (AQVL…TFLA), 94 to 114 (IPFI…GALI), 132 to 152 (DINT…YAGL), 198 to 218 (LVVA…MMFL), and 219 to 239 (GLFT…AYIG).

Belongs to the ATPase A chain family. In terms of assembly, F-type ATPases have 2 components, CF(1) - the catalytic core - and CF(0) - the membrane proton channel. CF(1) has five subunits: alpha(3), beta(3), gamma(1), delta(1), epsilon(1). CF(0) has four main subunits: a, b, b' and c.

Its subcellular location is the plastid. It is found in the chloroplast thylakoid membrane. In terms of biological role, key component of the proton channel; it plays a direct role in the translocation of protons across the membrane. The sequence is that of ATP synthase subunit a, chloroplastic from Chara vulgaris (Common stonewort).